The following is a 517-amino-acid chain: Ribonuclease Y (517 aa).

A helical membrane pass occupies residues 3 to 23 (AILYVIVAVIALILGGAAGVA). Residues 207–292 (TVTVVSLPND…EMVEKAQKEV (86 aa)) enclose the KH domain. The region spanning 333–426 (VLKHSIEVAH…VAAADAISAA (94 aa)) is the HD domain.

It belongs to the RNase Y family.

It is found in the cell membrane. Its function is as follows. Endoribonuclease that initiates mRNA decay. This is Ribonuclease Y from Symbiobacterium thermophilum (strain DSM 24528 / JCM 14929 / IAM 14863 / T).